The primary structure comprises 243 residues: Phosphoribosylaminoimidazole-succinocarboxamide synthase (243 aa).

It belongs to the SAICAR synthetase family.

It catalyses the reaction 5-amino-1-(5-phospho-D-ribosyl)imidazole-4-carboxylate + L-aspartate + ATP = (2S)-2-[5-amino-1-(5-phospho-beta-D-ribosyl)imidazole-4-carboxamido]succinate + ADP + phosphate + 2 H(+). It functions in the pathway purine metabolism; IMP biosynthesis via de novo pathway; 5-amino-1-(5-phospho-D-ribosyl)imidazole-4-carboxamide from 5-amino-1-(5-phospho-D-ribosyl)imidazole-4-carboxylate: step 1/2. This Methanobrevibacter smithii (strain ATCC 35061 / DSM 861 / OCM 144 / PS) protein is Phosphoribosylaminoimidazole-succinocarboxamide synthase.